A 623-amino-acid chain; its full sequence is Indolepyruvate oxidoreductase subunit IorA (623 aa).

Cys573, Cys576, Cys579, Cys585, Cys602, Cys605, Cys608, and Cys612 together coordinate [4Fe-4S] cluster. One can recognise a 4Fe-4S ferredoxin-type domain in the interval 593 to 622 (EKVSIDQSLCVGCAVCAKICPNRAIKPAKS).

In terms of assembly, heterodimer of the IorA and IorB subunits. Requires [4Fe-4S] cluster as cofactor.

The enzyme catalyses indole-3-pyruvate + 2 oxidized [2Fe-2S]-[ferredoxin] + CoA = (indol-3-yl)acetyl-CoA + 2 reduced [2Fe-2S]-[ferredoxin] + CO2 + H(+). Catalyzes the ferredoxin-dependent oxidative decarboxylation of arylpyruvates. The sequence is that of Indolepyruvate oxidoreductase subunit IorA (iorA) from Archaeoglobus fulgidus (strain ATCC 49558 / DSM 4304 / JCM 9628 / NBRC 100126 / VC-16).